A 305-amino-acid chain; its full sequence is MAATWYQVTCDVPAQLAETVADYLADLSGCGVCTENRDVDSFSPDDIPELAISQITCYFSLPCRIEQQLAQITGFLAALPGYIPAAPPRVSLLGEEDWASSWKAHFKPLAIGQRLLITPSWETGRQDEGRAVIVLDPGMAFGTGGHETTRLCLECLEGLLVPPPEQLEQIKILDLGTGSGILAIAAAKLGALQIDAVDIDPQAVIVAEENCALNKVADRISCSTTPLEQLGDGYRIILANILAEELVRMAPGIVSRMAPGGSLILSGILAEREALVRNGFDPFPLSFEASLAAGEWRCLHYRRLP.

The S-adenosyl-L-methionine site is built by T149, G176, D198, and N240.

Belongs to the methyltransferase superfamily. PrmA family.

The protein localises to the cytoplasm. The enzyme catalyses L-lysyl-[protein] + 3 S-adenosyl-L-methionine = N(6),N(6),N(6)-trimethyl-L-lysyl-[protein] + 3 S-adenosyl-L-homocysteine + 3 H(+). Methylates ribosomal protein L11. The chain is Ribosomal protein L11 methyltransferase from Trichlorobacter lovleyi (strain ATCC BAA-1151 / DSM 17278 / SZ) (Geobacter lovleyi).